A 63-amino-acid polypeptide reads, in one-letter code: Large ribosomal subunit protein bL35 (63 aa).

The protein belongs to the bacterial ribosomal protein bL35 family.

This chain is Large ribosomal subunit protein bL35, found in Sulfurimonas denitrificans (strain ATCC 33889 / DSM 1251) (Thiomicrospira denitrificans (strain ATCC 33889 / DSM 1251)).